The sequence spans 37 residues: Large ribosomal subunit protein bL36c (37 aa).

As to quaternary structure, component of the chloroplast large ribosomal subunit (LSU). Mature 70S chloroplast ribosomes of higher plants consist of a small (30S) and a large (50S) subunit. The 30S small subunit contains 1 molecule of ribosomal RNA (16S rRNA) and 24 different proteins. The 50S large subunit contains 3 rRNA molecules (23S, 5S and 4.5S rRNA) and 33 different proteins.

The protein localises to the plastid. It is found in the chloroplast. Component of the chloroplast ribosome (chloro-ribosome), a dedicated translation machinery responsible for the synthesis of chloroplast genome-encoded proteins, including proteins of the transcription and translation machinery and components of the photosynthetic apparatus. This chain is Large ribosomal subunit protein bL36c (rpl36), found in Spinacia oleracea (Spinach).